The sequence spans 351 residues: Protein FAM118B (351 aa).

Alanine 2 carries the N-acetylalanine modification. Position 9 is a phosphoserine (serine 9).

The protein belongs to the FAM118 family.

Its subcellular location is the nucleus. The protein localises to the cajal body. Its function is as follows. May play a role in Cajal bodies formation. The chain is Protein FAM118B (FAM118B) from Bos taurus (Bovine).